Consider the following 148-residue polypeptide: MICISGIPGTGKSTICNLLNDLGYTCVEGNALAVKYGCLSGDEVDVDCLSDRMRSDNFKGIVAAHYAHLLPCNIVIILEADESALRQRMMDRGYSPEKIDENLDAQRSDTIYAESLERLPANRIFRIRNADLNVALSDILRIIGGRNG.

ATP is bound by residues Gly9, Gly11, Lys12, Ser13, and Thr14. Residues 28–44 (EGNALAVKYGCLSGDEV) are NMP. The interval 91 to 101 (DRGYSPEKIDE) is LID. Residue Arg92 coordinates ATP.

It belongs to the adenylate kinase family. AK6 subfamily. Interacts with uS11. Not a structural component of 40S pre-ribosomes, but transiently interacts with them by binding to uS11.

It catalyses the reaction AMP + ATP = 2 ADP. The enzyme catalyses ATP + H2O = ADP + phosphate + H(+). Broad-specificity nucleoside monophosphate (NMP) kinase that catalyzes the reversible transfer of the terminal phosphate group between nucleoside triphosphates and monophosphates. Also has ATPase activity. Involved in the late maturation steps of the 30S ribosomal particles, specifically 16S rRNA maturation. While NMP activity is not required for ribosome maturation, ATPase activity is. Associates transiently with small ribosomal subunit protein uS11. ATP hydrolysis breaks the interaction with uS11. May temporarily remove uS11 from the ribosome to enable a conformational change of the ribosomal RNA that is needed for the final maturation step of the small ribosomal subunit. The sequence is that of Putative adenylate kinase from Thermoplasma acidophilum (strain ATCC 25905 / DSM 1728 / JCM 9062 / NBRC 15155 / AMRC-C165).